The sequence spans 929 residues: Ras guanine nucleotide exchange factor M (929 aa).

Residues 1–15 (MWQKPSLTKSMMNEV) are compositionally biased toward polar residues. Disordered regions lie at residues 1-102 (MWQK…AAGS) and 169-316 (TNNN…SKSL). The span at 16–33 (SSNSPKSPTLTSSPSTQS) shows a compositional bias: low complexity. Residues 44-67 (LDGGGGGSNRLIFGGSGGGSGGGS) show a composition bias toward gly residues. Composition is skewed to low complexity over residues 68-80 (LPSS…VNPF) and 169-191 (TNNN…NNDG). The span at 192–202 (SGSGSGAGGSF) shows a compositional bias: gly residues. The segment covering 203–246 (IGTTTSAKTTSTTSTSAATTTTTTTTSSSSSSPSSSSPSSTSPT) has biased composition (low complexity). Positions 247 to 256 (IASNNDNNNK) are enriched in polar residues. Positions 270–287 (PPLTLSQSQTQQQQQQKV) are enriched in low complexity. Polar residues predominate over residues 295 to 305 (RFSTNSSGSQS). The N-terminal Ras-GEF domain maps to 390–528 (NKFVVVSGPK…PILDLYEKLK (139 aa)). The segment at 540–583 (SLSGSGGISNNNNGSDLKNSNNGNNSSNNNNSSSNSSSSSSSSD) is disordered. The 236-residue stretch at 676 to 911 (SPQDIAKQLT…YAFSKFIESP (236 aa)) folds into the Ras-GEF domain.

Its function is as follows. Promotes the exchange of Ras-bound GDP by GTP. The protein is Ras guanine nucleotide exchange factor M (gefM) of Dictyostelium discoideum (Social amoeba).